The primary structure comprises 321 residues: MFSSKKSLLLFKNVRYMSTSSSKTVGFIGLGNMGGHQAINLIKKGHNLIVFDMSKDNMNRLKEKGAKIANSPAEVAKEADVIVTMLPASAHVKNVYCGENGIFQTVRPGTLLLDSSTIDPATAREVASIAKKHQSTMLDCPVSGGTGGAEAGTLTFMVGGSEQDFNTAKTYLECMGKNIVHCGDVGTGQVAKVCNNLVLGISMIAVSEAMNLGVKQGMDPKKLAGIFNTSSARCWTSELYNPCPGVIETSPASRGYTGGFGSALMTKDLGLAVDSAKSIGEPLLLGNSAHQLYTLLVAKGDGQKDFSVVYDFLNKNFKNSN.

NAD(+) contacts are provided by residues 23-52, 86-87, and T117; these read KTVGFIGLGNMGGHQAINLIKKGHNLIVFD and LP. K192 is a catalytic residue. K267 contacts NAD(+).

This sequence belongs to the HIBADH-related family. 3-hydroxyisobutyrate dehydrogenase subfamily.

It is found in the mitochondrion. The catalysed reaction is 3-hydroxy-2-methylpropanoate + NAD(+) = 2-methyl-3-oxopropanoate + NADH + H(+). The protein operates within amino-acid degradation; L-valine degradation. In Dictyostelium discoideum (Social amoeba), this protein is Probable 3-hydroxyisobutyrate dehydrogenase, mitochondrial (hibA).